The primary structure comprises 405 residues: Arrestin red cell isoform 2 (405 aa).

This sequence belongs to the arrestin family.

It localises to the cytoplasm. The chain is Arrestin red cell isoform 2 from Oncorhynchus mykiss (Rainbow trout).